The sequence spans 208 residues: Uracil phosphoribosyltransferase (208 aa).

5-phospho-alpha-D-ribose 1-diphosphate-binding positions include arginine 78, arginine 103, and aspartate 130–serine 138. Uracil is bound by residues isoleucine 193 and glycine 198–alanine 200. Residue aspartate 199 participates in 5-phospho-alpha-D-ribose 1-diphosphate binding.

Belongs to the UPRTase family. Requires Mg(2+) as cofactor.

The enzyme catalyses UMP + diphosphate = 5-phospho-alpha-D-ribose 1-diphosphate + uracil. It functions in the pathway pyrimidine metabolism; UMP biosynthesis via salvage pathway; UMP from uracil: step 1/1. Allosterically activated by GTP. In terms of biological role, catalyzes the conversion of uracil and 5-phospho-alpha-D-ribose 1-diphosphate (PRPP) to UMP and diphosphate. The chain is Uracil phosphoribosyltransferase from Aliivibrio salmonicida (strain LFI1238) (Vibrio salmonicida (strain LFI1238)).